The primary structure comprises 213 residues: Protein nullo (213 aa).

In terms of tissue distribution, blastoderm. Throughout the entire cortex of the embryo although the distribution is not uniform.

Its function is as follows. Actin-myosin network stability during cellularization. Might be involved in increasing actin-actin interactions or membrane-to-cytoskeleton attachments. nullo together with Sry-a and bnk may provide auxiliary functions, by acting both to stabilize a large and dynamic microfilament structure and regulate its functions. This chain is Protein nullo (nullo), found in Drosophila melanogaster (Fruit fly).